Reading from the N-terminus, the 31-residue chain is Cytochrome b6-f complex subunit 6 (31 aa).

A helical transmembrane segment spans residues 4–26 (ITSYFGFLLAASTITPALLIGLS).

Belongs to the PetL family. In terms of assembly, the 4 large subunits of the cytochrome b6-f complex are cytochrome b6, subunit IV (17 kDa polypeptide, PetD), cytochrome f and the Rieske protein, while the 4 small subunits are PetG, PetL, PetM and PetN. The complex functions as a dimer.

It is found in the plastid. The protein localises to the chloroplast thylakoid membrane. Its function is as follows. Component of the cytochrome b6-f complex, which mediates electron transfer between photosystem II (PSII) and photosystem I (PSI), cyclic electron flow around PSI, and state transitions. PetL is important for photoautotrophic growth as well as for electron transfer efficiency and stability of the cytochrome b6-f complex. The polypeptide is Cytochrome b6-f complex subunit 6 (Illicium oligandrum (Star anise)).